The sequence spans 204 residues: Holliday junction branch migration complex subunit RuvA (204 aa).

The interval 1-64 (MIGKLKGTID…EDQLKLFGFM (64 aa)) is domain I. The tract at residues 65–143 (TALEREWFNL…AYAGEAINIA (79 aa)) is domain II. Residues 144 to 151 (LKRELGEG) are flexible linker. The domain III stretch occupies residues 152 to 204 (VAAAPVADAVSALTNLGYSRDQAANAVAAAMKTAGEGADSAKLIRLGLKELAR).

Belongs to the RuvA family. In terms of assembly, homotetramer. Forms an RuvA(8)-RuvB(12)-Holliday junction (HJ) complex. HJ DNA is sandwiched between 2 RuvA tetramers; dsDNA enters through RuvA and exits via RuvB. An RuvB hexamer assembles on each DNA strand where it exits the tetramer. Each RuvB hexamer is contacted by two RuvA subunits (via domain III) on 2 adjacent RuvB subunits; this complex drives branch migration. In the full resolvosome a probable DNA-RuvA(4)-RuvB(12)-RuvC(2) complex forms which resolves the HJ.

It is found in the cytoplasm. In terms of biological role, the RuvA-RuvB-RuvC complex processes Holliday junction (HJ) DNA during genetic recombination and DNA repair, while the RuvA-RuvB complex plays an important role in the rescue of blocked DNA replication forks via replication fork reversal (RFR). RuvA specifically binds to HJ cruciform DNA, conferring on it an open structure. The RuvB hexamer acts as an ATP-dependent pump, pulling dsDNA into and through the RuvAB complex. HJ branch migration allows RuvC to scan DNA until it finds its consensus sequence, where it cleaves and resolves the cruciform DNA. The polypeptide is Holliday junction branch migration complex subunit RuvA (Rhizobium etli (strain ATCC 51251 / DSM 11541 / JCM 21823 / NBRC 15573 / CFN 42)).